The chain runs to 990 residues: TonB-dependent receptor P26 (990 aa).

The short motif at 86-93 is the TonB box element; it reads DEVVVIGY. The TBDR plug domain maps to 97 to 213; the sequence is RKSDLTGSVS…ANGVVLVTTK (117 aa). The region spanning 220–990 is the TBDR beta-barrel domain; it reads SSKPEVSANI…TITLGLNVTF (771 aa). The interval 878 to 902 is disordered; sequence TPENPTSDIPRAGGDSVTGTPPNSA. Positions 974–990 match the TonB C-terminal box motif; it reads GSYPNPRTITLGLNVTF.

The protein belongs to the TonB-dependent receptor family.

It is found in the cell outer membrane. In terms of biological role, tonB-dependent receptor probably involved in ulvan degradation. Ulvan is the main polysaccharide component of the Ulvales (green seaweed) cell wall. It is composed of disaccharide building blocks comprising 3-sulfated rhamnose (Rha3S) linked to D-glucuronic acid (GlcA), L-iduronic acid (IduA), or D-xylose (Xyl). The TonB-dependent receptor may mediate transport of ulvan oligosaccharides from the surface of the outer membrane to the periplasm for subsequent degradation. The protein is TonB-dependent receptor P26 of Formosa agariphila (strain DSM 15362 / KCTC 12365 / LMG 23005 / KMM 3901 / M-2Alg 35-1).